The primary structure comprises 550 residues: DNA-directed RNA polymerase subunit alpha (550 aa).

The alpha N-terminal domain (alpha-NTD) stretch occupies residues methionine 1–lysine 333. The interval threonine 185–asparagine 258 is insert. Residues phenylalanine 378–phenylalanine 550 form an alpha C-terminal domain (alpha-CTD) region.

The protein belongs to the RNA polymerase alpha chain family. As to quaternary structure, in plastids the minimal PEP RNA polymerase catalytic core is composed of four subunits: alpha, beta, beta', and beta''. When a (nuclear-encoded) sigma factor is associated with the core the holoenzyme is formed, which can initiate transcription.

Its subcellular location is the plastid. The protein resides in the chloroplast. The enzyme catalyses RNA(n) + a ribonucleoside 5'-triphosphate = RNA(n+1) + diphosphate. Functionally, DNA-dependent RNA polymerase catalyzes the transcription of DNA into RNA using the four ribonucleoside triphosphates as substrates. This Chlamydomonas reinhardtii (Chlamydomonas smithii) protein is DNA-directed RNA polymerase subunit alpha (rpoA).